A 164-amino-acid chain; its full sequence is uncharacterized protein (164 aa).

The N-terminal 60 residues, 1–60, are a transit peptide targeting the chloroplast; it reads MERSASVGVNDGRFGGNQFYSPSFSSSSSSSSMRHVNYSCGSCGYELNLSSTNRITSTIG.

It is found in the plastid. It localises to the chloroplast. This is an uncharacterized protein from Arabidopsis thaliana (Mouse-ear cress).